The sequence spans 136 residues: Putative LysR family substrate binding domain-containing protein YagP (136 aa).

The protein belongs to the LysR transcriptional regulatory family.

The sequence is that of Putative LysR family substrate binding domain-containing protein YagP (yagP) from Escherichia coli (strain K12).